A 173-amino-acid chain; its full sequence is Crossover junction endodeoxyribonuclease RuvC (173 aa).

Residues Asp-8, Glu-67, and Asp-139 contribute to the active site. Mg(2+) is bound by residues Asp-8, Glu-67, and Asp-139.

Belongs to the RuvC family. In terms of assembly, homodimer which binds Holliday junction (HJ) DNA. The HJ becomes 2-fold symmetrical on binding to RuvC with unstacked arms; it has a different conformation from HJ DNA in complex with RuvA. In the full resolvosome a probable DNA-RuvA(4)-RuvB(12)-RuvC(2) complex forms which resolves the HJ. Requires Mg(2+) as cofactor.

Its subcellular location is the cytoplasm. It carries out the reaction Endonucleolytic cleavage at a junction such as a reciprocal single-stranded crossover between two homologous DNA duplexes (Holliday junction).. In terms of biological role, the RuvA-RuvB-RuvC complex processes Holliday junction (HJ) DNA during genetic recombination and DNA repair. Endonuclease that resolves HJ intermediates. Cleaves cruciform DNA by making single-stranded nicks across the HJ at symmetrical positions within the homologous arms, yielding a 5'-phosphate and a 3'-hydroxyl group; requires a central core of homology in the junction. The consensus cleavage sequence is 5'-(A/T)TT(C/G)-3'. Cleavage occurs on the 3'-side of the TT dinucleotide at the point of strand exchange. HJ branch migration catalyzed by RuvA-RuvB allows RuvC to scan DNA until it finds its consensus sequence, where it cleaves and resolves the cruciform DNA. The polypeptide is Crossover junction endodeoxyribonuclease RuvC (Vibrio vulnificus (strain YJ016)).